The primary structure comprises 430 residues: MEF2-activating motif and SAP domain-containing transcriptional regulator (430 aa).

An MEF2-binding motif is present at residues 12 to 28; that stretch reads IIRSKFRSVLQLRIHRR. Disordered regions lie at residues 84-172, 204-239, 280-301, and 330-416; these read CWSL…PLPH, KSML…RFRP, VATT…APAS, and EDQV…DLSD. Positions 87–103 are enriched in basic and acidic residues; sequence LKKESPKTSQHWREPKP. Positions 147 to 170 are enriched in pro residues; sequence QPPPRMKPTPLTPSPPGVPSPSPL. Positions 181–215 constitute an SAP domain; it reads LEELTVSELRQQLRLRGLPVSGTKSMLLERMRGGA. Residues 207-228 show a composition bias toward basic and acidic residues; it reads LLERMRGGAPPRERPKARREDS. Residues 224 to 430 form a transcription activation region; the sequence is RREDSAAGAP…RLWDLLEDPW (207 aa). Composition is skewed to low complexity over residues 363-373 and 393-403; these read SSVFSSSLPSP and ALSGGPSLGCG.

In terms of assembly, interacts with MEF2C.

Its subcellular location is the nucleus. Transcriptional coactivator. Stimulates the transcriptional activity of MEF2C. Stimulates MYOD1 activity in part via MEF2, resulting in an enhancement of skeletal muscle differentiation. The sequence is that of MEF2-activating motif and SAP domain-containing transcriptional regulator (MAMSTR) from Bos taurus (Bovine).